The sequence spans 50 residues: Small ribosomal subunit protein uS14 (50 aa).

Positions 15, 18, 33, and 36 each coordinate Zn(2+).

Belongs to the universal ribosomal protein uS14 family. Zinc-binding uS14 subfamily. Part of the 30S ribosomal subunit. Zn(2+) is required as a cofactor.

Its function is as follows. Binds 16S rRNA, required for the assembly of 30S particles. This Methanosarcina acetivorans (strain ATCC 35395 / DSM 2834 / JCM 12185 / C2A) protein is Small ribosomal subunit protein uS14.